We begin with the raw amino-acid sequence, 380 residues long: MALDRSDGLNSLGFAKAPADTRVVVAMSGGVDSSAVAAQLADEGYDVVGVTLQLYDHGAALAKKGACCAGRDIHDAARVAETMGFPHYVLDYENVFKDAVIDEFADSYLAGATPVPCIRCNERVKFKDLLETAKDLDADCMATGHYIQRKMGREKAELHSAADAARDQSYFLFSTKQEQLDFLRFPLGHLESKAETRALAAKYGLSVADKPDSQDICFVPNGNYAAVIEKLRPGAADPGEIVDIDGNVLAMHRGVIHYTIGQRRGLGIGGLDDPLYVVKLDPDTRRVIVGPKEMLSTRTVPVREINWLGDTPFDSQQEWQMDVKIRSTRPPRGAVIRPVSATEAEVELIVAEEGVSPGQACVFYAPEGGRIFGGGWIHKG.

ATP is bound by residues 26 to 33 (AMSGGVDS) and Leu-52. Cys-120 (nucleophile) is an active-site residue. An intrachain disulfide couples Cys-120 to Cys-217. Gly-144 serves as a coordination point for ATP. The segment at 166 to 168 (RDQ) is interaction with tRNA. The active-site Cysteine persulfide intermediate is the Cys-217.

The protein belongs to the MnmA/TRMU family.

It localises to the cytoplasm. The catalysed reaction is S-sulfanyl-L-cysteinyl-[protein] + uridine(34) in tRNA + AH2 + ATP = 2-thiouridine(34) in tRNA + L-cysteinyl-[protein] + A + AMP + diphosphate + H(+). In terms of biological role, catalyzes the 2-thiolation of uridine at the wobble position (U34) of tRNA, leading to the formation of s(2)U34. The protein is tRNA-specific 2-thiouridylase MnmA of Jannaschia sp. (strain CCS1).